The primary structure comprises 62 residues: Small acidic protein 1 (62 aa).

In terms of assembly, interacts with the COP9 signalosome. Expressed in roots, flowers, siliques, stems, leaves and seeds. In flowers, detected in petals, anthers and pistils.

Functionally, mediates responses to the synthetic auxin 2,4-dichlorophenoxyacetic acid (2,4-D). Not involved in the response to indole-3-acetic acid (IAA). Interacts with RUB modification-related components and may regulate the cullin-ring ubiquitin E3 ligase complex (CRL) activity. This is Small acidic protein 1 (SMAP1) from Arabidopsis thaliana (Mouse-ear cress).